The primary structure comprises 414 residues: 5-aminolevulinate synthase (414 aa).

Substrate contacts are provided by arginine 22, serine 133, and lysine 152. The pyridoxal 5'-phosphate site is built by serine 185, histidine 213, and threonine 241. Lysine 244 is an active-site residue. Residue lysine 244 is modified to N6-(pyridoxal phosphate)lysine. Pyridoxal 5'-phosphate-binding residues include threonine 273 and threonine 274. Threonine 359 contacts substrate.

It belongs to the class-II pyridoxal-phosphate-dependent aminotransferase family. As to quaternary structure, homodimer. It depends on pyridoxal 5'-phosphate as a cofactor.

The enzyme catalyses succinyl-CoA + glycine + H(+) = 5-aminolevulinate + CO2 + CoA. It functions in the pathway porphyrin-containing compound metabolism; protoporphyrin-IX biosynthesis; 5-aminolevulinate from glycine: step 1/1. This chain is 5-aminolevulinate synthase (hemA), found in Rickettsia conorii (strain ATCC VR-613 / Malish 7).